Consider the following 375-residue polypeptide: Lipid droplet hydrolase 1 (375 aa).

The 271-residue stretch at 88-358 folds into the AB hydrolase-1 domain; sequence VFVFVPGLAG…CSHNLCFDRP (271 aa). Ser177 functions as the Charge relay system in the catalytic mechanism. The Microbody targeting signal motif lies at 373–375; sequence SKL.

It belongs to the AB hydrolase superfamily. Lipase family.

The protein resides in the lipid droplet. The catalysed reaction is a triacylglycerol + H2O = a diacylglycerol + a fatty acid + H(+). Its function is as follows. Serine hydrolase required for the maintenance of steady state level of non-polar and polar lipids of lipid droplets and thus plays a role in maintaining the lipids homeostasis. Exhibits both esterase and triacylglycerol lipase activity. This Saccharomyces cerevisiae (strain ATCC 204508 / S288c) (Baker's yeast) protein is Lipid droplet hydrolase 1.